Reading from the N-terminus, the 165-residue chain is Carboxypeptidase inhibitor SmCI (165 aa).

Residues Ile-1 and Ser-2 each contribute to the a protein site. An inserts into the active site groove of a carboxypeptidase and inhibits activity by emulating a C-terminal substrate region spans residues 1-2 (IS). 2 consecutive BPTI/Kunitz inhibitor domains span residues 4 to 54 (CDLP…IANC) and 56 to 106 (CNLP…QEVC). 6 disulfide bridges follow: Cys-4–Cys-54, Cys-13–Cys-37, Cys-29–Cys-50, Cys-56–Cys-106, Cys-65–Cys-89, and Cys-81–Cys-102. Asn-23 carries an N-linked (GlcNAc...) asparagine glycan. Residues Tyr-109, Gln-110, Lys-111, and Gly-113 each coordinate a protein. In terms of domain architecture, BPTI/Kunitz inhibitor 3 spans 115-165 (CYQPSETGPCKGSFPRYYYDYEDGECKEFIYGGCEGNANNFETKESCENAC). Intrachain disulfides connect Cys-115/Cys-165, Cys-124/Cys-148, and Cys-140/Cys-161.

In terms of processing, contains 9 disulfide bonds. As to expression, expressed in the tentacle crown. Not detected in annelid body.

Its function is as follows. Potent inhibitor of pancreatic carboxypeptidase A with a Ki of 27 nM, and of the serine proteases trypsin, chymotrypsin and pancreatic elastase, with Ki values of 6.9 nM, 1.83 nM and 4 nM, respectively. Also inhibits carboxypeptidase A4 CPA4 and CPA1. Does not inhibit cysteine and aspartic proteases. The polypeptide is Carboxypeptidase inhibitor SmCI (Sabellastarte magnifica (Feather duster)).